Reading from the N-terminus, the 57-residue chain is DNA-directed RNA polymerase subunit Rpo6 (57 aa).

The protein belongs to the archaeal Rpo6/eukaryotic RPB6 RNA polymerase subunit family. In terms of assembly, part of the RNA polymerase complex.

The protein localises to the cytoplasm. It catalyses the reaction RNA(n) + a ribonucleoside 5'-triphosphate = RNA(n+1) + diphosphate. In terms of biological role, DNA-dependent RNA polymerase (RNAP) catalyzes the transcription of DNA into RNA using the four ribonucleoside triphosphates as substrates. The sequence is that of DNA-directed RNA polymerase subunit Rpo6 from Pyrococcus furiosus (strain ATCC 43587 / DSM 3638 / JCM 8422 / Vc1).